Consider the following 188-residue polypeptide: dCTP deaminase (188 aa).

DCTP-binding positions include 111 to 116 (KSTYAR), 135 to 137 (TLE), Gln156, Tyr170, and Gln180. Residue Glu137 is the Proton donor/acceptor of the active site.

The protein belongs to the dCTP deaminase family. As to quaternary structure, homotrimer.

It carries out the reaction dCTP + H2O + H(+) = dUTP + NH4(+). Its pathway is pyrimidine metabolism; dUMP biosynthesis; dUMP from dCTP (dUTP route): step 1/2. In terms of biological role, catalyzes the deamination of dCTP to dUTP. In Nitrosococcus oceani (strain ATCC 19707 / BCRC 17464 / JCM 30415 / NCIMB 11848 / C-107), this protein is dCTP deaminase.